The chain runs to 400 residues: Na(+)/H(+) antiporter NhaA 1 (400 aa).

The next 11 helical transmembrane spans lie at 25–45, 67–87, 103–123, 130–150, 159–179, 184–204, 213–233, 264–284, 303–323, 339–359, and 372–392; these read IVLMFCAIIAIIIANSNFSSM, ILHWINDGLMAIFFLVVGMEI, ILPVSAAIGGMVVPAIIYALF, IIGWGIPMATDIAFALGILSL, IIIFLTALAIVDDLGAIIVIA, SEISWIALILGLIIFLAIILA, WLYIIFGIALWICFLKSGVHE, VLTPLSSFIIMPIFALANSGI, IIFGLFIGKQIGIFGASYILV, LYGASVLGGIGFTMSLFVSSL, and ISIIIASILSAAFGAAIFKII.

This sequence belongs to the NhaA Na(+)/H(+) (TC 2.A.33) antiporter family.

The protein localises to the cell membrane. The enzyme catalyses Na(+)(in) + 2 H(+)(out) = Na(+)(out) + 2 H(+)(in). Its function is as follows. Na(+)/H(+) antiporter that extrudes sodium in exchange for external protons. This Clostridium beijerinckii (strain ATCC 51743 / NCIMB 8052) (Clostridium acetobutylicum) protein is Na(+)/H(+) antiporter NhaA 1.